Here is a 345-residue protein sequence, read N- to C-terminus: Phosphoribosylformylglycinamidine cyclo-ligase (345 aa).

Belongs to the AIR synthase family.

The protein resides in the cytoplasm. The catalysed reaction is 2-formamido-N(1)-(5-O-phospho-beta-D-ribosyl)acetamidine + ATP = 5-amino-1-(5-phospho-beta-D-ribosyl)imidazole + ADP + phosphate + H(+). Its pathway is purine metabolism; IMP biosynthesis via de novo pathway; 5-amino-1-(5-phospho-D-ribosyl)imidazole from N(2)-formyl-N(1)-(5-phospho-D-ribosyl)glycinamide: step 2/2. This chain is Phosphoribosylformylglycinamidine cyclo-ligase, found in Prochlorococcus marinus (strain MIT 9211).